A 44-amino-acid polypeptide reads, in one-letter code: uncharacterized protein (44 aa).

Its subcellular location is the plastid. The protein resides in the chloroplast. This is an uncharacterized protein from Trieres chinensis (Marine centric diatom).